Here is a 264-residue protein sequence, read N- to C-terminus: SPRY domain-containing SOCS box protein 2 (264 aa).

Positions 1-19 (MGQTALARGSSSTPTSQAL) are enriched in polar residues. A disordered region spans residues 1 to 34 (MGQTALARGSSSTPTSQALYSDFSPPEGLEELLS). Residues 26–221 (PEGLEELLSA…VRIRYMGERR (196 aa)) form the B30.2/SPRY domain. One can recognise an SOCS box domain in the interval 222 to 264 (VEEPQSLLHLSRLCVRHALGDTRLGQISTLPLPPAMKRYLLYK).

The protein belongs to the SPSB family. In terms of assembly, component of the probable ECS(SPSB2) E3 ubiquitin-protein ligase complex which contains CUL5, RNF7/RBX2, Elongin BC complex and SPSB2. Interacts with CUL5, RNF7, ELOB and ELOC. Interacts with MET. Interacts (via B30.2/SPRY domain) with PAWR; this interaction occurs in association with the Elongin BC complex. Interacts with NOS2.

The protein resides in the cytoplasm. Its subcellular location is the cytosol. It functions in the pathway protein modification; protein ubiquitination. Substrate recognition component of a SCF-like ECS (Elongin BC-CUL2/5-SOCS-box protein) E3 ubiquitin-protein ligase complex which mediates the ubiquitination and subsequent proteasomal degradation of target proteins. Negatively regulates nitric oxide (NO) production and limits cellular toxicity in activated macrophages by mediating the ubiquitination and proteasomal degradation of NOS2. Acts as a bridge which links NOS2 with the ECS E3 ubiquitin ligase complex components ELOC and CUL5. The sequence is that of SPRY domain-containing SOCS box protein 2 (Spsb2) from Mus musculus (Mouse).